Reading from the N-terminus, the 505-residue chain is tRNA-2-methylthio-N(6)-dimethylallyladenosine synthase (505 aa).

The disordered stretch occupies residues 1–39 (MGQKAKAQAPTTHPRPHTLSSQVAPALPRRPRHAAPESL). An MTTase N-terminal domain is found at 47–162 (MKAHLITYGC…IGAALESNER (116 aa)). Positions 56, 92, 125, 194, 198, and 201 each coordinate [4Fe-4S] cluster. The Radical SAM core domain maps to 180–413 (PSGKLQAHLT…IARQKDWSAR (234 aa)). The TRAM domain maps to 416–479 (AQKVGTVQQV…PHMMYGHILG (64 aa)).

This sequence belongs to the methylthiotransferase family. MiaB subfamily. In terms of assembly, monomer. The cofactor is [4Fe-4S] cluster.

The protein resides in the cytoplasm. The catalysed reaction is N(6)-dimethylallyladenosine(37) in tRNA + (sulfur carrier)-SH + AH2 + 2 S-adenosyl-L-methionine = 2-methylsulfanyl-N(6)-dimethylallyladenosine(37) in tRNA + (sulfur carrier)-H + 5'-deoxyadenosine + L-methionine + A + S-adenosyl-L-homocysteine + 2 H(+). In terms of biological role, catalyzes the methylthiolation of N6-(dimethylallyl)adenosine (i(6)A), leading to the formation of 2-methylthio-N6-(dimethylallyl)adenosine (ms(2)i(6)A) at position 37 in tRNAs that read codons beginning with uridine. The polypeptide is tRNA-2-methylthio-N(6)-dimethylallyladenosine synthase (Deinococcus radiodurans (strain ATCC 13939 / DSM 20539 / JCM 16871 / CCUG 27074 / LMG 4051 / NBRC 15346 / NCIMB 9279 / VKM B-1422 / R1)).